A 340-amino-acid polypeptide reads, in one-letter code: Leucine-rich repeat-containing protein 23 (340 aa).

Over residues 1-27 (MSDEDDVDDVDAEQDEVESDKEIEEWE) the composition is skewed to acidic residues. The disordered stretch occupies residues 1–38 (MSDEDDVDDVDAEQDEVESDKEIEEWEDYRKETEEASE). 6 LRR repeats span residues 89–110 (HLRYVDISENHITDISPLNSLT), 111–134 (HLLWLKADGNQLRSARMNELPYLQ), 177–197 (SLHTLELRGNQLESTKGIYLP), 198–219 (KLKNLYLAQNLLKKVEGLENLS), 220–241 (NLTTLHLRDNQIETLNGFSQEM), and 243–264 (SLQYLNLRSNMISDLAELAKLR). Residues 205–340 (AQNLLKKVEG…QDMEPYLPPV (136 aa)) form an interaction with RSPH9 region. Residues 277–315 (NPCADETDYRQEALVQMAHLERLDKEFYEDDDRAEAEEI) enclose the LRRCT domain. The stretch at 305–328 (EDDDRAEAEEIRQRLKEEQDQDLD) forms a coiled coil. The segment at 317-340 (QRLKEEQDQDLDPDQDMEPYLPPV) is disordered. The segment covering 323–333 (QDQDLDPDQDM) has biased composition (acidic residues).

Component of the axonemal radial spoke complex. Interacts with RSPH3A and RSPH3B. Interacts with RSPH9. As to expression, expressed in the testis (at protein level).

The protein resides in the cytoplasm. Its subcellular location is the cytoskeleton. The protein localises to the flagellum axoneme. In terms of biological role, essential for sperm motility and male fertility. Plays an important role in the proper assembly of the third radial spoke (RS3) head and the bridge structure between RS2 and RS3 in the sperm flagella. In Mus musculus (Mouse), this protein is Leucine-rich repeat-containing protein 23 (Lrrc23).